The chain runs to 942 residues: Leucine--tRNA ligase (942 aa).

The 'HIGH' region signature appears at 41-51 (PYLNGVLHAGH). Residues 633–637 (KLSKS) carry the 'KMSKS' region motif. Lysine 636 is an ATP binding site.

The protein belongs to the class-I aminoacyl-tRNA synthetase family.

It is found in the cytoplasm. The enzyme catalyses tRNA(Leu) + L-leucine + ATP = L-leucyl-tRNA(Leu) + AMP + diphosphate. The sequence is that of Leucine--tRNA ligase from Methanocaldococcus jannaschii (strain ATCC 43067 / DSM 2661 / JAL-1 / JCM 10045 / NBRC 100440) (Methanococcus jannaschii).